We begin with the raw amino-acid sequence, 2340 residues long: Proto-oncogene tyrosine-protein kinase ROS (2340 aa).

Residues 1-28 form the signal peptide; the sequence is MKNICWLTLKLVKFVVLGCIIWISVAQS. At 29-1854 the chain is on the extracellular side; it reads TVLSSCLTSC…EDGVWITETS (1826 aa). The N-linked (GlcNAc...) asparagine glycan is linked to Asn-53. 2 consecutive Fibronectin type-III domains span residues 111–206 and 207–295; these read LPTA…VPET and APLI…PSPS. Residues Asn-334 and Asn-362 are each glycosylated (N-linked (GlcNAc...) asparagine). Positions 567–667 constitute a Fibronectin type-III 3 domain; it reads LPGHPQEVSV…APSVGTTLVP (101 aa). Residues Asn-935 and Asn-1011 are each glycosylated (N-linked (GlcNAc...) asparagine). Fibronectin type-III domains are found at residues 943-1038 and 1039-1146; these read IPDP…SVPS and APEN…TSEI. N-linked (GlcNAc...) asparagine glycosylation is present at Asn-1243. Fibronectin type-III domains lie at 1442 to 1549, 1550 to 1649, 1651 to 1744, and 1745 to 1846; these read ASDM…TKSG, VPGA…VNMF, TPEK…TKAG, and VPSK…LVED. An N-linked (GlcNAc...) asparagine glycan is attached at Asn-1676. The chain crosses the membrane as a helical span at residues 1855 to 1875; it reads FILTIIVGIFLVATVPLTFVW. Residues 1876–2340 are Cytoplasmic-facing; that stretch reads HRSLKSHKAS…AHSEHGDVSE (465 aa). Residues 1938 to 2216 form the Protein kinase domain; the sequence is LSLRLLLGSG…QLQLFRNVFL (279 aa). ATP contacts are provided by residues 1944–1952 and Lys-1973; that span reads LGSGAFGEV. The active-site Proton acceptor is Asp-2072. 2 positions are modified to phosphotyrosine; by autocatalysis: Tyr-2267 and Tyr-2327.

It belongs to the protein kinase superfamily. Tyr protein kinase family. Insulin receptor subfamily. In terms of assembly, interacts with PTPN11; may activate the PI3 kinase-mTOR signaling pathway. Interacts with VAV3; constitutive interaction mediating VAV3 phosphorylation. Interacts with PTPN6 (via SH2 1 domain); the interaction is direct and promotes ROS1 dephosphorylation. In terms of processing, phosphorylated. Probably autophosphorylates. Phosphorylation at Tyr-2267 and/or Tyr-2327 recruits PTPN11. Phosphorylation at Tyr-2267 is required for the interaction with PTPN6 that mediates ROS1 dephosphorylation. Phosphorylation at Tyr-2267 stimulates the kinase activity and the activation of the ERK1 signaling cascade. In terms of tissue distribution, expressed by epithelial cells of the caput epididymis (at protein level).

Its subcellular location is the cell membrane. It catalyses the reaction L-tyrosyl-[protein] + ATP = O-phospho-L-tyrosyl-[protein] + ADP + H(+). Its activity is regulated as follows. Inhibited by dephosphorylation by PTPN6. In terms of biological role, receptor tyrosine kinase (RTK) that plays a role in epithelial cell differentiation and regionalization of the proximal epididymal epithelium. NELL2 is an endogenous ligand for ROS1. Upon endogenous stimulation by NELL2, ROS1 activates the intracellular signaling pathway and triggers epididymal epithelial differentiation and subsequent sperm maturation. May activate several downstream signaling pathways related to cell differentiation, proliferation, growth and survival including the PI3 kinase-mTOR signaling pathway. Mediates the phosphorylation of PTPN11, an activator of this pathway. May also phosphorylate and activate the transcription factor STAT3 to control anchorage-independent cell growth. Mediates the phosphorylation and the activation of VAV3, a guanine nucleotide exchange factor regulating cell morphology. May activate other downstream signaling proteins including AKT1, MAPK1, MAPK3, IRS1, and PLCG2. This Mus musculus (Mouse) protein is Proto-oncogene tyrosine-protein kinase ROS (Ros1).